A 1212-amino-acid chain; its full sequence is Metabotropic glutamate receptor 5 (1212 aa).

An N-terminal signal peptide occupies residues 1 to 20 (MVLLLILSVLLLKEDVRGSA). Topologically, residues 22-580 (SSERRVVAHM…QYLRWGDPEP (559 aa)) are extracellular. A disulfide bond links Cys57 and Cys99. Residue Tyr64 participates in L-glutamate binding. Asn88 is a glycosylation site (N-linked (GlcNAc...) asparagine). Residues Ser152 and 173–175 (SAT) each bind L-glutamate. Asn210 carries N-linked (GlcNAc...) asparagine glycosylation. Residue Tyr223 participates in L-glutamate binding. Cystine bridges form between Cys241-Cys530, Cys276-Cys278, Cys365-Cys381, Cys419-Cys426, Cys511-Cys531, Cys515-Cys534, Cys537-Cys549, and Cys552-Cys565. L-glutamate is bound at residue Asp305. N-linked (GlcNAc...) asparagine glycosylation is found at Asn378 and Asn382. L-glutamate is bound at residue Lys396. An N-linked (GlcNAc...) asparagine glycan is attached at Asn445. Residues 581–603 (IAAVVFACLGLLATLFVTVVFII) form a helical membrane-spanning segment. Residues 604–613 (YRDTPVVKSS) are Cytoplasmic-facing. A helical transmembrane segment spans residues 614 to 636 (SRELCYIILAGICLGYLCTFCLI). Residues 637 to 644 (AKPKQIYC) lie on the Extracellular side of the membrane. The cysteines at positions 644 and 733 are disulfide-linked. The chain crosses the membrane as a helical span at residues 645–667 (YLQRIGIGLSPAMSYSALVTKTN). Residues 668-693 (RIARILAGSKKKICTKKPRFMSACAQ) lie on the Cytoplasmic side of the membrane. Residues 694–714 (LVIAFILICIQLGIIVALFIM) form a helical membrane-spanning segment. The Extracellular segment spans residues 715-737 (EPPDIMHDYPSIREVYLICNTTN). An N-linked (GlcNAc...) asparagine glycan is attached at Asn734. Residues 738–759 (LGVVTPLGYNGLLILSCTFYAF) form a helical membrane-spanning segment. At 760–772 (KTRNVPANFNEAK) the chain is on the cytoplasmic side. Residues 773-795 (YIAFTMYTTCIIWLAFVPIYFGS) traverse the membrane as a helical segment. Residues 796 to 798 (NYK) are Extracellular-facing. A helical transmembrane segment spans residues 799 to 820 (IITMCFSVSLSATVALGCMFVP). Residues 821-1212 (KVYIILAKPE…RDYTQSSSSL (392 aa)) are Cytoplasmic-facing. Ser861 carries the post-translational modification Phosphoserine. Omega-N-methylarginine is present on residues Arg869 and Arg925. Disordered regions lie at residues 937–971 (INKK…GGSA), 1010–1056 (FPAP…SQGS), and 1132–1191 (GAQA…ALCI). Residues 961–971 (LGAGAGAGGSA) are compositionally biased toward gly residues. Residues Ser1018 and Ser1020 each carry the phosphoserine modification. Low complexity predominate over residues 1132–1153 (GAQAAGDAARESPAAGPEAAAA). A compositionally biased stretch (polar residues) spans 1174–1185 (DSGSTTPNSPVS).

This sequence belongs to the G-protein coupled receptor 3 family. The PPXXF motif binds HOMER1, HOMER2 and HOMER3. Interacts with SIAH1, RYR1, RYR2, ITPR1, SHANK1, SHANK3 and TAMALIN. Interacts with NCDN. Isoform 2 interacts with NECAB2. Interacts with CAMK2A.

It is found in the cell membrane. In terms of biological role, G-protein coupled receptor for glutamate. Ligand binding causes a conformation change that triggers signaling via guanine nucleotide-binding proteins (G proteins) and modulates the activity of down-stream effectors. Signaling activates a phosphatidylinositol-calcium second messenger system and generates a calcium-activated chloride current. Plays an important role in the regulation of synaptic plasticity and the modulation of the neural network activity. The chain is Metabotropic glutamate receptor 5 (GRM5) from Homo sapiens (Human).